Consider the following 187-residue polypeptide: Putative protein SSX8 (187 aa).

2 disordered regions span residues 1-21 and 109-187; these read MNGD…SEKR and PKIM…EDDE. The region spanning 20-83 is the KRAB-related domain; it reads KRSKAFNDIA…KQATDFQGNY (64 aa). S123 carries the post-translational modification Phosphoserine. Residues 152 to 168 are compositionally biased toward basic residues; the sequence is KRSGPKRGRHAWTHRLR.

The protein belongs to the SSX family. In terms of tissue distribution, not detected in any normal or tumor tissues.

Its function is as follows. Could act as a modulator of transcription. In Homo sapiens (Human), this protein is Putative protein SSX8.